The sequence spans 382 residues: L-arabinitol 4-dehydrogenase (382 aa).

The Zn(2+) site is built by Cys55, His80, Glu81, Cys110, Cys113, Cys116, Cys124, and Glu165. Residues Pro192–Ile193, Asp213, Arg218, Ile293, and Gln317–Arg319 contribute to the NAD(+) site.

This sequence belongs to the zinc-containing alcohol dehydrogenase family. As to quaternary structure, homotetramer. The cofactor is Zn(2+).

It carries out the reaction L-arabinitol + NAD(+) = L-xylulose + NADH + H(+). It functions in the pathway carbohydrate degradation; L-arabinose degradation via L-arabinitol; D-xylulose 5-phosphate from L-arabinose (fungal route): step 2/5. Its function is as follows. Catalyzes the NAD-dependent oxidation of L-arabinitol to L-xylulose in the fungal L-arabinose catabolic pathway. L-arabinose catabolism is important for using plant material as a carbon source. Also active on ribitol and xylitol. Not active with NADP as cosubstrate. In Aspergillus oryzae (Yellow koji mold), this protein is L-arabinitol 4-dehydrogenase (ladA).